The primary structure comprises 1165 residues: DNA-directed RNA polymerase subunit beta (1165 aa).

It belongs to the RNA polymerase beta chain family. As to quaternary structure, the RNAP catalytic core consists of 2 alpha, 1 beta, 1 beta' and 1 omega subunit. When a sigma factor is associated with the core the holoenzyme is formed, which can initiate transcription.

It catalyses the reaction RNA(n) + a ribonucleoside 5'-triphosphate = RNA(n+1) + diphosphate. In terms of biological role, DNA-dependent RNA polymerase catalyzes the transcription of DNA into RNA using the four ribonucleoside triphosphates as substrates. The sequence is that of DNA-directed RNA polymerase subunit beta from Corynebacterium glutamicum (strain R).